We begin with the raw amino-acid sequence, 358 residues long: Heavy metal-associated isoprenylated plant protein 37 (358 aa).

An HMA domain is found at 12–75 (IQTFSLRVNI…KLVKAGKHAE (64 aa)). Cys23 and Cys26 together coordinate a metal cation. 2 disordered regions span residues 100–194 (QKGQ…QNTQ) and 332–358 (QQQSSHSHATNMSSEEDAGNNNSCNIM). Over residues 128–141 (AEEDGDGSEEEDGD) the composition is skewed to acidic residues. Residues 148 to 181 (ANQQQQQNVVNAKKNSGGAAMNNGNNGVNAASKK) show a composition bias toward low complexity. Polar residues-rich tracts occupy residues 184-194 (QKQSNHNQNTQ) and 339-358 (HATNMSSEEDAGNNNSCNIM). Cys355 is modified (cysteine methyl ester). The S-farnesyl cysteine moiety is linked to residue Cys355. Positions 356–358 (NIM) are cleaved as a propeptide — removed in mature form.

Belongs to the HIPP family.

In terms of biological role, heavy-metal-binding protein. This chain is Heavy metal-associated isoprenylated plant protein 37, found in Arabidopsis thaliana (Mouse-ear cress).